The following is a 346-amino-acid chain: Glycerol-1-phosphate dehydrogenase [NAD(P)+] (346 aa).

Residues 93–97 (GSIID) and 115–118 (TTAS) contribute to the NAD(+) site. Position 120 (aspartate 120) interacts with substrate. Residue serine 124 participates in NAD(+) binding. Aspartate 167 serves as a coordination point for substrate. Zn(2+)-binding residues include aspartate 167 and histidine 247. Histidine 251 is a binding site for substrate. Histidine 263 lines the Zn(2+) pocket.

The protein belongs to the glycerol-1-phosphate dehydrogenase family. The cofactor is Zn(2+).

It localises to the cytoplasm. The enzyme catalyses sn-glycerol 1-phosphate + NAD(+) = dihydroxyacetone phosphate + NADH + H(+). The catalysed reaction is sn-glycerol 1-phosphate + NADP(+) = dihydroxyacetone phosphate + NADPH + H(+). It functions in the pathway membrane lipid metabolism; glycerophospholipid metabolism. Catalyzes the NAD(P)H-dependent reduction of dihydroxyacetonephosphate (DHAP or glycerone phosphate) to glycerol 1-phosphate (G1P). The G1P thus generated is used as the glycerophosphate backbone of phospholipids in the cellular membranes of Archaea. The chain is Glycerol-1-phosphate dehydrogenase [NAD(P)+] from Pyrococcus abyssi (strain GE5 / Orsay).